We begin with the raw amino-acid sequence, 276 residues long: Ubiquinone biosynthesis protein coq11, mitochondrial (276 aa).

The protein belongs to the NAD(P)-dependent epimerase/dehydratase family.

Its subcellular location is the mitochondrion. Acts in the coenzyme Q biosynthetic pathway. The chain is Ubiquinone biosynthesis protein coq11, mitochondrial from Schizosaccharomyces pombe (strain 972 / ATCC 24843) (Fission yeast).